A 957-amino-acid chain; its full sequence is Thioredoxin domain-containing protein 11 (957 aa).

A compositionally biased stretch (gly residues) spans 1 to 13; that stretch reads MSECGGRGGGGGS. The tract at residues 1 to 47 is disordered; that stretch reads MSECGGRGGGGGSSSSSDDAEDEGGGGGPAGSGSLSPAPAASSEGRL. Low complexity predominate over residues 32 to 44; that stretch reads SGSLSPAPAASSE. The helical transmembrane segment at 64 to 84 threads the bilayer; the sequence is LLCGAVALGCALLLALKFTCS. The region spanning 91–213 is the Thioredoxin 1 domain; the sequence is IPAKPPVSFF…IEKFVRRVMK (123 aa). Intrachain disulfides connect cysteine 441–cysteine 444 and cysteine 691–cysteine 694. One can recognise a Thioredoxin 2 domain in the interval 621–771; that stretch reads LDPKQALMKF…LLRFILHHSD (151 aa). Residues 785-889 adopt a coiled-coil conformation; that stretch reads AECLQNEAVL…ADASETLLTE (105 aa). The segment covering 904 to 925 has biased composition (basic and acidic residues); the sequence is LEGRDGADDRVPPSKARSEHPE. Residues 904–957 form a disordered region; that stretch reads LEGRDGADDRVPPSKARSEHPEPPGAPRLPASTPLPANISSTLASEGSPENRTD. Positions 941–951 are enriched in polar residues; sequence NISSTLASEGS.

The protein belongs to the protein disulfide isomerase family. In terms of assembly, interacts with the cytoplasmic part of DUOX1 and DUOX2. Interacts with TPO and CYBA.

The protein localises to the endoplasmic reticulum membrane. In terms of biological role, may act as a redox regulator involved in DUOX proteins folding. The interaction with DUOX1 and DUOX2 suggest that it belongs to a multiprotein complex constituting the thyroid H(2)O(2) generating system. It is however not sufficient to assist DUOX1 and DUOX2 in H(2)O(2) generation. This is Thioredoxin domain-containing protein 11 (TXNDC11) from Bos taurus (Bovine).